The sequence spans 461 residues: Porin AaxA (461 aa).

Positions 1–22 (MSFRSVLLTALLSLSFTTTMQA) are cleaved as a signal peptide.

This sequence belongs to the OprB family.

It localises to the cell outer membrane. Its function is as follows. Facilitates L-arginine uptake, as part of the AaxABC system. The arginine uptake by the bacterium in the macrophage may be a virulence factor against the host innate immune response. The sequence is that of Porin AaxA (aaxA) from Chlamydia trachomatis serovar A (strain ATCC VR-571B / DSM 19440 / HAR-13).